The chain runs to 244 residues: Small ribosomal subunit protein uS3 (244 aa).

The KH type-2 domain occupies 38 to 106 (IRKYLNARLA…DIQINIFEVK (69 aa)). The disordered stretch occupies residues 217 to 244 (TQSKESGRGNNGGNNGGGKNFKRKKNNR). A compositionally biased stretch (gly residues) spans 225–235 (GNNGGNNGGGK).

Belongs to the universal ribosomal protein uS3 family. Part of the 30S ribosomal subunit. Forms a tight complex with proteins S10 and S14.

Functionally, binds the lower part of the 30S subunit head. Binds mRNA in the 70S ribosome, positioning it for translation. This is Small ribosomal subunit protein uS3 from Bacteroides fragilis (strain ATCC 25285 / DSM 2151 / CCUG 4856 / JCM 11019 / LMG 10263 / NCTC 9343 / Onslow / VPI 2553 / EN-2).